Reading from the N-terminus, the 367-residue chain is UDP-N-acetylglucosamine--N-acetylmuramyl-(pentapeptide) pyrophosphoryl-undecaprenol N-acetylglucosamine transferase (367 aa).

UDP-N-acetyl-alpha-D-glucosamine-binding positions include 11–13 (TAG), N125, R163, S197, and Q289.

It belongs to the glycosyltransferase 28 family. MurG subfamily.

It is found in the cell membrane. The catalysed reaction is di-trans,octa-cis-undecaprenyl diphospho-N-acetyl-alpha-D-muramoyl-L-alanyl-D-glutamyl-meso-2,6-diaminopimeloyl-D-alanyl-D-alanine + UDP-N-acetyl-alpha-D-glucosamine = di-trans,octa-cis-undecaprenyl diphospho-[N-acetyl-alpha-D-glucosaminyl-(1-&gt;4)]-N-acetyl-alpha-D-muramoyl-L-alanyl-D-glutamyl-meso-2,6-diaminopimeloyl-D-alanyl-D-alanine + UDP + H(+). It functions in the pathway cell wall biogenesis; peptidoglycan biosynthesis. Cell wall formation. Catalyzes the transfer of a GlcNAc subunit on undecaprenyl-pyrophosphoryl-MurNAc-pentapeptide (lipid intermediate I) to form undecaprenyl-pyrophosphoryl-MurNAc-(pentapeptide)GlcNAc (lipid intermediate II). The chain is UDP-N-acetylglucosamine--N-acetylmuramyl-(pentapeptide) pyrophosphoryl-undecaprenol N-acetylglucosamine transferase from Clavibacter michiganensis subsp. michiganensis (strain NCPPB 382).